The primary structure comprises 79 residues: Conotoxin LiCr173 (79 aa).

An N-terminal signal peptide occupies residues 1–20 (MSGLGTMVLTLLLLVFMVTS). The propeptide occupies 21-46 (HQDGGKKQATQRNAVNIRRRKSITQR). Intrachain disulfides connect cysteine 52–cysteine 64, cysteine 56–cysteine 73, and cysteine 63–cysteine 77. The residue at position 78 (phenylalanine 78) is a Phenylalanine amide.

This sequence belongs to the conotoxin O3 superfamily. In terms of tissue distribution, expressed by the venom duct.

Its subcellular location is the secreted. The sequence is that of Conotoxin LiCr173 from Conus lividus (Livid cone).